The chain runs to 159 residues: uncharacterized protein (159 aa).

The N-acetyltransferase domain occupies 7–151; the sequence is LLINYKTLEE…NPLVWHPASE (145 aa).

This is an uncharacterized protein from Bacillus licheniformis (strain ATCC 14580 / DSM 13 / JCM 2505 / CCUG 7422 / NBRC 12200 / NCIMB 9375 / NCTC 10341 / NRRL NRS-1264 / Gibson 46).